Consider the following 145-residue polypeptide: Hemoglobin subunit beta (145 aa).

A Globin domain is found at 1–145 (MLTAEEKAAV…VANALAHRYH (145 aa)). At Thr11 the chain carries Phosphothreonine. At Ser43 the chain carries Phosphoserine. Position 58 is an N6-acetyllysine (Lys58). Residue His62 participates in heme b binding. The residue at position 81 (Lys81) is an N6-acetyllysine. His91 serves as a coordination point for heme b. S-nitrosocysteine is present on Cys92.

It belongs to the globin family. In terms of assembly, heterotetramer of two alpha chains and two beta chains. Red blood cells.

Functionally, involved in oxygen transport from the lung to the various peripheral tissues. The polypeptide is Hemoglobin subunit beta (HBB) (Bos mutus grunniens (Wild yak)).